Reading from the N-terminus, the 396-residue chain is Probable sugar efflux transporter (396 aa).

12 consecutive transmembrane segments (helical) span residues Val-15 to Leu-35, Val-50 to Leu-70, Leu-81 to Phe-101, Val-103 to Ala-123, Ala-136 to Leu-156, Phe-170 to Leu-190, Pro-209 to Tyr-229, Phe-246 to Gly-266, Ala-275 to Ala-295, Ile-299 to Met-319, Val-333 to Gly-353, and Met-364 to Phe-384.

This sequence belongs to the major facilitator superfamily. SotB (TC 2.A.1.2) family.

The protein localises to the cell inner membrane. Involved in the efflux of sugars. The physiological role may be the reduction of the intracellular concentration of toxic sugars or sugar metabolites. The sequence is that of Probable sugar efflux transporter from Escherichia coli O157:H7 (strain EC4115 / EHEC).